The chain runs to 178 residues: ATP-dependent protease subunit HslV (178 aa).

T8 is an active-site residue. Na(+)-binding residues include G163, C166, and T169.

It belongs to the peptidase T1B family. HslV subfamily. A double ring-shaped homohexamer of HslV is capped on each side by a ring-shaped HslU homohexamer. The assembly of the HslU/HslV complex is dependent on binding of ATP.

The protein localises to the cytoplasm. The enzyme catalyses ATP-dependent cleavage of peptide bonds with broad specificity.. Its activity is regulated as follows. Allosterically activated by HslU binding. In terms of biological role, protease subunit of a proteasome-like degradation complex believed to be a general protein degrading machinery. The sequence is that of ATP-dependent protease subunit HslV from Xylella fastidiosa (strain 9a5c).